The chain runs to 107 residues: MVARKTYILKLYVAGNTPNSMRALNTLKEILENEFKGVYALKVIDVLKQPQLAEEDKILATPTLAKILPPPVRRIIGDLSDREKVLIGLDLLFDELSESEYSGGTKN.

It belongs to the KaiB family. May undergo a major conformational rearrangment; in the free state forms homooligomers. When bound to KaiC switches to a monomeric thioredoxin-fold (KaiB(fs)). The active oscillator complex is probably KaiC(6):KaiB(6).

Component of the KaiBC clock protein complex, which constitutes the main circadian regulator in cyanobacteria; it may modify the ATPase activity of KaiC. Its function is as follows. Does not stimulate dephosphorylation of endogenous KaiC, although it does stimulate dephosphorylation of KiaC from S.elongatus strain PCC 7942. Reduces the ATPase activity of KaiC by about half in vitro, which may be its function in vivo. Functionally, may be a metamorphic protein which reversibly switches between an inactive tetrameric fold and a rare, thioredoxin-like monomeric fold (KaiB(fs)). KaiB(fs) binds phospho-KaiC, and perhaps clock output effectors. This Prochlorococcus marinus subsp. pastoris (strain CCMP1986 / NIES-2087 / MED4) protein is Circadian clock oscillator protein KaiB.